A 341-amino-acid chain; its full sequence is Arfaptin-2 (341 aa).

Residues 46–84 form a disordered region; it reads NETSIVSGGYGGSGDGLIPTGSGRHPSHSTSPSGPGDEV. A compositionally biased stretch (low complexity) spans 65–81; that stretch reads TGSGRHPSHSTSPSGPG. Phosphoserine is present on Ser72. Residues 121–321 enclose the AH domain; the sequence is TVDLELELQI…NQKQLEQTLQ (201 aa).

Forms homodimers or heterodimers with ARFIP1. Interacts with RAC1. Specifically binds to GTP-bound ARF1 and ARF6, but binds to RAC1.GTP and RAC1.GDP with similar affinities. Interacts with ARL1. Interacts (via N-terminus) with IKBKB and IKBKG; these interactions inhibit activation of NF-kappa-B.

The protein localises to the golgi apparatus. It is found in the trans-Golgi network membrane. In terms of biological role, plays a role in constitutive metalloproteinase (MMP) secretion from the trans Golgi network. May have important functions during vesicle biogenesis at certain cargo subdomains, which could be predominantly utilized by secreted MMPs, such as MMP7 and MMP2. Also involved in autophagy by regulating the starvation-dependent trafficking of ATG9A vesicles which deliver the phosphatidylinositol 4-kinase beta (PI4KB) to the autophagosome initiation site. Involved in phagophore growth during mitophagy by regulating ATG9A trafficking to mitochondria. In addition, plays a role in NF-kappa-B inhibition by interacting with IKBKB and IKBKG. The polypeptide is Arfaptin-2 (Mus musculus (Mouse)).